The chain runs to 388 residues: Chitinase 4 (388 aa).

The 354-residue stretch at 22-375 (FKTCVYFSNW…KNFVDQLGGV (354 aa)) folds into the GH18 domain. Residues asparagine 30 and asparagine 82 are each glycosylated (N-linked (GlcNAc...) asparagine). Residues 82-83 (NQ) and 109-112 (GGWG) each bind chitin. Asparagine 123 and asparagine 132 each carry an N-linked (GlcNAc...) asparagine glycan. Glutamate 151 (proton donor) is an active-site residue. Residue tyrosine 152 coordinates chitin. Residue asparagine 155 is glycosylated (N-linked (GlcNAc...) asparagine). 208–211 (MCYD) is a chitin binding site. Residue asparagine 237 is glycosylated (N-linked (GlcNAc...) asparagine). Tryptophan 350 provides a ligand contact to chitin.

This sequence belongs to the glycosyl hydrolase 18 family. Chitinase class V subfamily.

It localises to the secreted. The catalysed reaction is Random endo-hydrolysis of N-acetyl-beta-D-glucosaminide (1-&gt;4)-beta-linkages in chitin and chitodextrins.. Its function is as follows. Chitinase involved in the remodeling of chitin in the fungal cell wall. Plays a role in sporulation. In Candida albicans (strain SC5314 / ATCC MYA-2876) (Yeast), this protein is Chitinase 4 (CHT4).